We begin with the raw amino-acid sequence, 301 residues long: MTTKYDVKTFQGFILTLQDYWAQQGCAIVQPLDMEVGAGTFHPQTFLRALGPEPMSSAYVQPSRRPTDGRYGENPNRLQHYYQFQVVLKPSPDNIQELYLGSLRALGIDTQIHDIRFVEDNWESPTLGAWGLGWEVWLNGMEVTQFTYFQQVGGIECSPVTGEITYGLERLAMYIQGVDSVYDLVWTDGPMGRITYGDVFHQNEVEQSTYNFEHADVDFLFGMFDQCEKACQHLLSLETPLPLPAYEQVMKASHAFNLLDARHAISVTERQRYILRVRTMAKAVAEAYYKAREALGFPMCK.

It belongs to the class-II aminoacyl-tRNA synthetase family. In terms of assembly, tetramer of two alpha and two beta subunits.

It localises to the cytoplasm. The enzyme catalyses tRNA(Gly) + glycine + ATP = glycyl-tRNA(Gly) + AMP + diphosphate. This Shewanella amazonensis (strain ATCC BAA-1098 / SB2B) protein is Glycine--tRNA ligase alpha subunit.